The chain runs to 440 residues: Serine hydroxymethyltransferase (440 aa).

(6S)-5,6,7,8-tetrahydrofolate-binding positions include Leu119 and 123-125 (GHL). An N6-(pyridoxal phosphate)lysine modification is found at Lys228. A (6S)-5,6,7,8-tetrahydrofolate-binding site is contributed by 370-372 (SPF).

Belongs to the SHMT family. As to quaternary structure, homodimer. Pyridoxal 5'-phosphate is required as a cofactor.

Its subcellular location is the cytoplasm. It carries out the reaction (6R)-5,10-methylene-5,6,7,8-tetrahydrofolate + glycine + H2O = (6S)-5,6,7,8-tetrahydrofolate + L-serine. Its pathway is one-carbon metabolism; tetrahydrofolate interconversion. It participates in amino-acid biosynthesis; glycine biosynthesis; glycine from L-serine: step 1/1. Catalyzes the reversible interconversion of serine and glycine with tetrahydrofolate (THF) serving as the one-carbon carrier. This reaction serves as the major source of one-carbon groups required for the biosynthesis of purines, thymidylate, methionine, and other important biomolecules. Also exhibits THF-independent aldolase activity toward beta-hydroxyamino acids, producing glycine and aldehydes, via a retro-aldol mechanism. This chain is Serine hydroxymethyltransferase, found in Chlorobaculum parvum (strain DSM 263 / NCIMB 8327) (Chlorobium vibrioforme subsp. thiosulfatophilum).